The primary structure comprises 149 residues: Putative pre-16S rRNA nuclease (149 aa).

This sequence belongs to the YqgF nuclease family.

It localises to the cytoplasm. Its function is as follows. Could be a nuclease involved in processing of the 5'-end of pre-16S rRNA. In Pseudoalteromonas translucida (strain TAC 125), this protein is Putative pre-16S rRNA nuclease.